We begin with the raw amino-acid sequence, 1169 residues long: DNA-directed RNA polymerase subunit beta (1169 aa).

Belongs to the RNA polymerase beta chain family. The RNAP catalytic core consists of 2 alpha, 1 beta, 1 beta' and 1 omega subunit. When a sigma factor is associated with the core the holoenzyme is formed, which can initiate transcription. Interacts with RbpA, which partially restores Rif-inhibited transcription.

The catalysed reaction is RNA(n) + a ribonucleoside 5'-triphosphate = RNA(n+1) + diphosphate. Its function is as follows. DNA-dependent RNA polymerase catalyzes the transcription of DNA into RNA using the four ribonucleoside triphosphates as substrates. This subunit often mutates to generate rifampicin (Rif) resistance. Interaction with RbpA partially restores Rif-inhibited transcription; once the subunit is Rif-resistant however RbpA no longer stimulates transcription. The sequence is that of DNA-directed RNA polymerase subunit beta from Mycolicibacterium smegmatis (strain ATCC 700084 / mc(2)155) (Mycobacterium smegmatis).